Reading from the N-terminus, the 418-residue chain is Histidine--tRNA ligase (418 aa).

Belongs to the class-II aminoacyl-tRNA synthetase family.

Its subcellular location is the cytoplasm. It catalyses the reaction tRNA(His) + L-histidine + ATP = L-histidyl-tRNA(His) + AMP + diphosphate + H(+). This is Histidine--tRNA ligase from Methanococcus maripaludis (strain C7 / ATCC BAA-1331).